Consider the following 416-residue polypeptide: MDEADRRLLRRCRLRLVEELQVDQLWDALLSRELFRPHMIEDIQRAGSGSRRDQARQLIIDLETRGSQALPLFISCLEDTGQDMLASFLRTNRQAAKLSKPTLENLTPVVLRPEIRKPEVLRPETPRPVDIGSGGFGDVGALESLRGNADLAYILSMEPCGHCLIINNVNFCRESGLRTRTGSNIDCEKLRRRFSSLHFMVEVKGDLTAKKMVLALLELAQQDHGALDCCVVVILSHGCQASHLQFPGAVYGTDGCPVSVEKIVNIFNGTSCPSLGGKPKLFFIQACGGEQKDHGFEVASTSPEDESPGSNPEPDATPFQEGLRTFDQLDAISSLPTPSDIFVSYSTFPGFVSWRDPKSGSWYVETLDDIFEQWAHSEDLQSLLLRVANAVSVKGIYKQMPGCFNFLRKKLFFKTS.

In terms of domain architecture, CARD spans 1 to 92 (MDEADRRLLR…DMLASFLRTN (92 aa)). Threonine 125 is subject to Phosphothreonine; by MAPK1. Tyrosine 153 carries the phosphotyrosine; by ABL1 modification. Catalysis depends on residues histidine 237 and cysteine 287. The tract at residues 294-320 (HGFEVASTSPEDESPGSNPEPDATPFQ) is disordered. A phosphoserine mark is found at serine 302, serine 307, and serine 310. A propeptide spanning residues 316-330 (ATPFQEGLRTFDQLD) is cleaved from the precursor. At arginine 355 the chain carries (Microbial infection) ADP-riboxanated arginine.

This sequence belongs to the peptidase C14A family. As to quaternary structure, heterotetramer that consists of two anti-parallel arranged heterodimers, each one formed by a 35 kDa (p35) and a 10 kDa (p10) subunit. Caspase-9 and APAF1 bind to each other via their respective NH2-terminal CED-3 homologous domains in the presence of cytochrome C and ATP. Interacts (inactive form) with EFHD2. Interacts with HAX1. Interacts with BIRC2/c-IAP1, XIAP/BIRC4, BIRC5/survivin, BIRC6/bruce and BIRC7/livin. Interacts with ABL1 (via SH3 domain); the interaction is direct and increases in the response of cells to genotoxic stress and ABL1/c-Abl activation. Interacts with BCL2L10. Interacts with NleF from pathogenic E.coli. Post-translationally, cleavages at Asp-315 by granzyme B and at Asp-330 by caspase-3 generate the two active subunits. Caspase-8 and -10 can also be involved in these processing events. Phosphorylated at Thr-125 by MAPK1/ERK2. Phosphorylation at Thr-125 is sufficient to block caspase-9 processing and subsequent caspase-3 activation. Phosphorylation on Tyr-153 by ABL1/c-Abl; occurs in the response of cells to DNA damage. In terms of processing, (Microbial infection) ADP-riboxanation by C.violaceum CopC blocks CASP9 processing, preventing CASP9 activation and ability to mediate intrinsic apoptosis. Post-translationally, ubiquitinated by BIRC6; this activity is inhibited by DIABLO/SMAC. In terms of tissue distribution, ubiquitous, with highest expression in the heart, moderate expression in liver, skeletal muscle, and pancreas. Low levels in all other tissues. Within the heart, specifically expressed in myocytes.

It carries out the reaction Strict requirement for an Asp residue at position P1 and with a marked preference for His at position P2. It has a preferred cleavage sequence of Leu-Gly-His-Asp-|-Xaa.. With respect to regulation, inhibited by the effector protein NleF that is produced by pathogenic E.coli; this inhibits apoptosis. Inhibited by BIRC6; following inhibition of BIRC6-caspase binding by DIABLO/SMAC, BIRC6 is subjected to caspase cleavage, leading to an increase in active caspases. Its function is as follows. Involved in the activation cascade of caspases responsible for apoptosis execution. Binding of caspase-9 to Apaf-1 leads to activation of the protease which then cleaves and activates effector caspases caspase-3 (CASP3) or caspase-7 (CASP7). Promotes DNA damage-induced apoptosis in a ABL1/c-Abl-dependent manner. Proteolytically cleaves poly(ADP-ribose) polymerase (PARP). Cleaves BIRC6 following inhibition of BIRC6-caspase binding by DIABLO/SMAC. Lacks activity is an dominant-negative inhibitor of caspase-9. The polypeptide is Caspase-9 (CASP9) (Homo sapiens (Human)).